Consider the following 278-residue polypeptide: Non-heme chloroperoxidase (278 aa).

Residues 26–264 form the AB hydrolase-1 domain; that stretch reads PVVLIHGFPL…GAPHGLLWTH (239 aa). Residues serine 99, aspartate 229, and histidine 258 contribute to the active site.

It belongs to the AB hydrolase superfamily. Bacterial non-heme haloperoxidase / perhydrolase family. As to quaternary structure, homodimer.

This is Non-heme chloroperoxidase (cpo) from Kitasatospora aureofaciens (Streptomyces aureofaciens).